The primary structure comprises 293 residues: Nucleotide-binding protein cauri_1197 (293 aa).

16–23 contributes to the ATP binding site; the sequence is GMSGGGLT. 67–70 is a binding site for GTP; the sequence is DVRS.

The protein belongs to the RapZ-like family.

Functionally, displays ATPase and GTPase activities. This Corynebacterium aurimucosum (strain ATCC 700975 / DSM 44827 / CIP 107346 / CN-1) (Corynebacterium nigricans) protein is Nucleotide-binding protein cauri_1197.